Consider the following 122-residue polypeptide: N(2)-fixation sustaining protein CowN (122 aa).

Belongs to the CowN family.

Is required to sustain N(2)-dependent growth in the presence of low levels of carbon monoxide (CO). Probably acts by protecting the N(2) fixation ability of the nitrogenase complex, which is inactivated in the presence of CO. The protein is N(2)-fixation sustaining protein CowN of Azorhizobium caulinodans (strain ATCC 43989 / DSM 5975 / JCM 20966 / LMG 6465 / NBRC 14845 / NCIMB 13405 / ORS 571).